The primary structure comprises 968 residues: RNA polymerase-associated protein RapA (968 aa).

The 171-residue stretch at 164-334 (DVGRRHAPRV…FARLRLLDPN (171 aa)) folds into the Helicase ATP-binding domain. 177-184 (DEVGLGKT) lines the ATP pocket. Positions 280 to 283 (DEAH) match the DEAH box motif. The 196-residue stretch at 490 to 685 (RVEWLMGYLT…ALKAQLEQGR (196 aa)) folds into the Helicase C-terminal domain.

Belongs to the SNF2/RAD54 helicase family. RapA subfamily. As to quaternary structure, interacts with the RNAP. Has a higher affinity for the core RNAP than for the holoenzyme. Its ATPase activity is stimulated by binding to RNAP.

Its function is as follows. Transcription regulator that activates transcription by stimulating RNA polymerase (RNAP) recycling in case of stress conditions such as supercoiled DNA or high salt concentrations. Probably acts by releasing the RNAP, when it is trapped or immobilized on tightly supercoiled DNA. Does not activate transcription on linear DNA. Probably not involved in DNA repair. This chain is RNA polymerase-associated protein RapA, found in Salmonella schwarzengrund (strain CVM19633).